We begin with the raw amino-acid sequence, 261 residues long: Triosephosphate isomerase (261 aa).

10–12 contacts substrate; it reads NWK. The active-site Electrophile is His100. Glu172 functions as the Proton acceptor in the catalytic mechanism. Substrate-binding positions include Gly178, Ser218, and 239-240; that span reads GG.

It belongs to the triosephosphate isomerase family. As to quaternary structure, homodimer.

Its subcellular location is the cytoplasm. It catalyses the reaction D-glyceraldehyde 3-phosphate = dihydroxyacetone phosphate. The protein operates within carbohydrate biosynthesis; gluconeogenesis. It functions in the pathway carbohydrate degradation; glycolysis; D-glyceraldehyde 3-phosphate from glycerone phosphate: step 1/1. Involved in the gluconeogenesis. Catalyzes stereospecifically the conversion of dihydroxyacetone phosphate (DHAP) to D-glyceraldehyde-3-phosphate (G3P). In Saccharopolyspora erythraea (strain ATCC 11635 / DSM 40517 / JCM 4748 / NBRC 13426 / NCIMB 8594 / NRRL 2338), this protein is Triosephosphate isomerase.